Reading from the N-terminus, the 96-residue chain is Large ribosomal subunit protein bL28 (96 aa).

Residues 1–22 are compositionally biased toward polar residues; sequence MSRSCELTGKGVQSGNNVSHAN. The segment at 1–24 is disordered; it reads MSRSCELTGKGVQSGNNVSHANNK.

The protein belongs to the bacterial ribosomal protein bL28 family.

The sequence is that of Large ribosomal subunit protein bL28 from Sinorhizobium medicae (strain WSM419) (Ensifer medicae).